Here is a 449-residue protein sequence, read N- to C-terminus: Probable magnetosome protein Mms48 (449 aa).

Residues 1–18 (MLLRLIVLLIFMSPVVFA) form the signal peptide. A helical transmembrane segment spans residues 40–60 (SNMPVLLAVILVVFLIFSALS). The stretch at 323 to 356 (PDGHLAAGEAAFAVQKWGVARRHIMAALKIAPDA) is one TPR repeat.

It is found in the magnetosome membrane. In terms of biological role, overexpression in wild-type cells increases the number of cells with double magnetosome chains significantly. The 4 genes of this operon collectively influence magnetosome size and number. In Magnetospirillum gryphiswaldense (strain DSM 6361 / JCM 21280 / NBRC 15271 / MSR-1), this protein is Probable magnetosome protein Mms48.